A 432-amino-acid polypeptide reads, in one-letter code: Glutamyl-tRNA reductase (432 aa).

Residues 49-52 (TCNR), Ser-101, 106-108 (ESQ), and Gln-112 contribute to the substrate site. The Nucleophile role is filled by Cys-50. 181–186 (GTGETI) contacts NADP(+).

It belongs to the glutamyl-tRNA reductase family. Homodimer.

The catalysed reaction is (S)-4-amino-5-oxopentanoate + tRNA(Glu) + NADP(+) = L-glutamyl-tRNA(Glu) + NADPH + H(+). Its pathway is porphyrin-containing compound metabolism; protoporphyrin-IX biosynthesis; 5-aminolevulinate from L-glutamyl-tRNA(Glu): step 1/2. Functionally, catalyzes the NADPH-dependent reduction of glutamyl-tRNA(Glu) to glutamate 1-semialdehyde (GSA). The chain is Glutamyl-tRNA reductase from Xylella fastidiosa (strain M12).